The chain runs to 213 residues: Phosphatidylserine decarboxylase proenzyme (213 aa).

S182 (schiff-base intermediate with substrate; via pyruvic acid) is an active-site residue. Position 182 is a pyruvic acid (Ser); by autocatalysis (S182).

This sequence belongs to the phosphatidylserine decarboxylase family. PSD-A subfamily. Heterodimer of a large membrane-associated beta subunit and a small pyruvoyl-containing alpha subunit. Pyruvate serves as cofactor. Post-translationally, is synthesized initially as an inactive proenzyme. Formation of the active enzyme involves a self-maturation process in which the active site pyruvoyl group is generated from an internal serine residue via an autocatalytic post-translational modification. Two non-identical subunits are generated from the proenzyme in this reaction, and the pyruvate is formed at the N-terminus of the alpha chain, which is derived from the carboxyl end of the proenzyme. The post-translation cleavage follows an unusual pathway, termed non-hydrolytic serinolysis, in which the side chain hydroxyl group of the serine supplies its oxygen atom to form the C-terminus of the beta chain, while the remainder of the serine residue undergoes an oxidative deamination to produce ammonia and the pyruvoyl prosthetic group on the alpha chain.

It localises to the cell membrane. It catalyses the reaction a 1,2-diacyl-sn-glycero-3-phospho-L-serine + H(+) = a 1,2-diacyl-sn-glycero-3-phosphoethanolamine + CO2. It functions in the pathway phospholipid metabolism; phosphatidylethanolamine biosynthesis; phosphatidylethanolamine from CDP-diacylglycerol: step 2/2. In terms of biological role, catalyzes the formation of phosphatidylethanolamine (PtdEtn) from phosphatidylserine (PtdSer). The chain is Phosphatidylserine decarboxylase proenzyme from Chlorobium phaeobacteroides (strain BS1).